A 1434-amino-acid polypeptide reads, in one-letter code: Protein patched homolog 1 (1434 aa).

Low complexity predominate over residues 1–13; it reads MASAGNAAGALGR. Positions 1–34 are disordered; the sequence is MASAGNAAGALGRQAGGGRRRRTGGPHRAAPDRD. The Cytoplasmic segment spans residues 1–86; sequence MASAGNAAGA…GCYIQKNCGK (86 aa). The helical transmembrane segment at 87–107 threads the bilayer; it reads FLVVGLLIFGAFAVGLKAANL. Over 108 to 422 the chain is Extracellular; the sequence is ETNVEELWVE…LDDILKSFSD (315 aa). Residues N127, N298, N335, and N400 are each glycosylated (N-linked (GlcNAc...) asparagine). A helical transmembrane segment spans residues 423–443; sequence VSVIRVASGYLLMLAYACLTM. Residues 424–584 form the SSD domain; it reads SVIRVASGYL…LLIFPAILSM (161 aa). Residues 444–458 are Cytoplasmic-facing; the sequence is LRWDCSKSQGAVGLA. Residues 459–479 traverse the membrane as a helical segment; it reads GVLLVALSVAAGLGLCSLIGI. The Extracellular segment spans residues 480–487; sequence SFNAATTQ. Residues 488–508 form a helical membrane-spanning segment; sequence VLPFLALGVGVDDVFLLAHAF. Topologically, residues 509-533 are cytoplasmic; it reads SETGQNKRIPFEDRTGECLKRTGAS. Residues 534–554 form a helical membrane-spanning segment; that stretch reads VALTSISNVTAFFMAALIPIP. The Extracellular segment spans residues 555–563; the sequence is ALRAFSLQA. The helical transmembrane segment at 564 to 584 threads the bilayer; that stretch reads AVVVVFNFAMVLLIFPAILSM. At 585–734 the chain is on the cytoplasmic side; sequence DLYRREDRRL…HYAPFLLKPK (150 aa). A helical transmembrane segment spans residues 735 to 755; that stretch reads AKVVVILLFLGLLGVSLYGTT. Over 756 to 1013 the chain is Extracellular; it reads RVRDGLDLTD…WEQYISLRHW (258 aa). 2 N-linked (GlcNAc...) asparagine glycosylation sites follow: N861 and N986. Residues 1014–1034 traverse the membrane as a helical segment; it reads LLLSISVVLACTFLVCAVFLL. The Cytoplasmic segment spans residues 1035–1039; the sequence is NPWTA. The helical transmembrane segment at 1040 to 1060 threads the bilayer; the sequence is GIIVMVLALMTVELFGMMGLI. Residues 1061 to 1069 lie on the Extracellular side of the membrane; sequence GIKLSAVPV. Residues 1070–1090 form a helical membrane-spanning segment; sequence VILIASVGIGVEFTVHVALAF. The Cytoplasmic portion of the chain corresponds to 1091–1107; sequence LTAIGDKNHRAMLALEH. A helical membrane pass occupies residues 1108-1128; sequence MFAPVLDGAVSTLLGVLMLAG. Topologically, residues 1129–1140 are extracellular; that stretch reads SEFDFIVRYFFA. A helical membrane pass occupies residues 1141-1161; sequence VLAILTVLGVLNGLVLLPVLL. At 1162–1434 the chain is on the cytoplasmic side; that stretch reads SFFGPCPEVS…EERPWGSSSN (273 aa). 3 disordered regions span residues 1175–1219, 1257–1348, and 1368–1396; these read GLNR…TVSG, HPDS…SSVP, and HPPP…HGVF. The residue at position 1181 (T1181) is a Phosphothreonine. Residue S1183 is modified to Phosphoserine. Low complexity predominate over residues 1204-1213; it reads SDSSDSEYSS. Positions 1288–1297 are enriched in basic and acidic residues; sequence PRRDPPREGL. A compositionally biased stretch (polar residues) spans 1335 to 1348; it reads PRNPTSTAMGSSVP. K1413 is covalently cross-linked (Glycyl lysine isopeptide (Lys-Gly) (interchain with G-Cter in ubiquitin)).

It belongs to the patched family. Interacts with SNX17. Interacts with IHH. Interacts with G-protein coupled receptor GPR37L1. In terms of processing, glycosylation is necessary for SHH binding. Post-translationally, in the absence of Hh ligands, ubiquitination by ITCH at Lys-1413 promotes endocytosis and both proteasomal and lysosomal degradation. Detected in cerebellar Bergmann glia cells (at protein level). In the developing embryo, first detected within the ventral neural tube and later in the somites and limb buds. Expression in the limb buds is restricted to the posterior ectoderm surrounding the zone of polarizing activity. In the adult, expression is seen in brain, lung, liver, kidney and ocular tissues; lower levels in heart, skeletal muscle, and testis.

It is found in the cell membrane. Functionally, acts as a receptor for sonic hedgehog (SHH), indian hedgehog (IHH) and desert hedgehog (DHH). Associates with the smoothened protein (SMO) to transduce the hedgehog's proteins signal. Seems to have a tumor suppressor function, as inactivation of this protein is probably a necessary, if not sufficient step for tumorigenesis. The polypeptide is Protein patched homolog 1 (Ptch1) (Mus musculus (Mouse)).